Here is a 37-residue protein sequence, read N- to C-terminus: Large ribosomal subunit protein bL36 (37 aa).

Belongs to the bacterial ribosomal protein bL36 family.

This chain is Large ribosomal subunit protein bL36, found in Sulfurihydrogenibium sp. (strain YO3AOP1).